The sequence spans 403 residues: Pantothenate kinase (403 aa).

Residues Ser80, Ser82, and Ser84 each carry the phosphoserine modification.

Belongs to the type II pantothenate kinase family.

Its subcellular location is the cytoplasm. The protein localises to the nucleus. It catalyses the reaction (R)-pantothenate + ATP = (R)-4'-phosphopantothenate + ADP + H(+). Its pathway is cofactor biosynthesis; coenzyme A biosynthesis; CoA from (R)-pantothenate: step 1/5. Regulated by feedback inhibition by malonyl-CoA. Plays a role in the physiological regulation of the intracellular CoA concentration. In Schizosaccharomyces pombe (strain 972 / ATCC 24843) (Fission yeast), this protein is Pantothenate kinase.